The primary structure comprises 925 residues: Probable glycoprotein hormone G-protein coupled receptor (925 aa).

Residues 1–27 (MEDRGICPRVLQVLFLVVLILISPVYA) form the signal peptide. Over 28–529 (AKNDACTKCS…EDIMGYVWLT (502 aa)) the chain is Extracellular. N-linked (GlcNAc...) asparagine glycosylation is present at N61. LRR repeat units follow at residues 85 to 106 (KLKYLTLNNNKIKNIAKFRVKN), 110 to 131 (SLITLSYTHNIIETIENGAFDD), 134 to 155 (QLTQLDLSNNRLKEFPIFNKTS), 156 to 180 (SVTKLYLRGNPGITKLPRQSLGNLP), 181 to 202 (SLENLFMERTGIQEIPAGIFRQ), 203 to 224 (NTRLINLYFNKTKALERINEDA), 230 to 250 (SLKTLVLDETSVTSLPSRGLK), and 251 to 273 (NLHFLSLKDVPNFWQLPELDSIR). N-linked (GlcNAc...) asparagine glycosylation occurs at N152. N212 is a glycosylation site (N-linked (GlcNAc...) asparagine). Positions 299–493 (TMQKPSTEEN…PTLIPHSNHT (195 aa)) are disordered. Over residues 301 to 318 (QKPSTEENNGQTTASSPT) the composition is skewed to polar residues. The stretch at 333–349 (STQPHTTSGFGGGGFPG) is one 1; truncated repeat. Positions 333 to 461 (STQPHTTSGF…PGGGGFPGGG (129 aa)) are 5 X approximate tandem repeats. The segment covering 341 to 362 (GFGGGGFPGGGGGFPGGGGFPA) has biased composition (gly residues). 3 consecutive repeat copies span residues 350-384 (GGGGFPGGGGFPAGGSKTSTQPHTTSGFGGGGFPG), 385-419 (GGGGFPGGGGFPAGGSKTSTQPHTTSGFGGGGFPG), and 420-453 (GGGGFPGGGGFPGGSNTSTQPHTTSNSGGGGFPG). The span at 365–375 (SKTSTQPHTTS) shows a compositional bias: polar residues. Positions 376 to 397 (GFGGGGFPGGGGGFPGGGGFPA) are enriched in gly residues. Positions 400-410 (SKTSTQPHTTS) are enriched in polar residues. The span at 411 to 432 (GFGGGGFPGGGGGFPGGGGFPG) shows a compositional bias: gly residues. The span at 434-445 (SNTSTQPHTTSN) shows a compositional bias: polar residues. N435 carries an N-linked (GlcNAc...) asparagine glycan. The span at 446–462 (SGGGGFPGGGGFPGGGT) shows a compositional bias: gly residues. Residues 454–461 (GGGFPGGG) form a 5; truncated repeat. Positions 476 to 493 (VHQSTADPPTLIPHSNHT) are enriched in polar residues. N495 carries N-linked (GlcNAc...) asparagine glycosylation. The chain crosses the membrane as a helical span at residues 530 to 551 (VVSFMVGAVALVANLVVALVLL). The Cytoplasmic segment spans residues 552 to 561 (TSQRRLNVTR). A helical membrane pass occupies residues 562–584 (FLMCNLAFADFILGLYIFILTSV). Residues 585–606 (SAVTRGDYHNYVQQWQNGAGCK) are Extracellular-facing. A helical membrane pass occupies residues 607 to 628 (ILGFLAVFSSELSLFTLVMMTI). Residues 629–651 (ERFYAIVHAMHMNARLSFRKTVR) lie on the Cytoplasmic side of the membrane. A helical transmembrane segment spans residues 652–673 (FMIGGWIFALVMAVVPLTGVSG). The Extracellular portion of the chain corresponds to 674–691 (YSKVAICLPFDVSDATST). A helical transmembrane segment spans residues 692–712 (AYVAFLLLVNGASFISVMYLY). Residues 713–739 (SRMLYVVVSGGDMEGAPKRNDSKVAKR) lie on the Cytoplasmic side of the membrane. Residues 740–763 (MAILVFTDMLCWAPIAFFGLLAAF) form a helical membrane-spanning segment. Residues 764–774 (GQTLLTVTQSK) lie on the Extracellular side of the membrane. Residues 775 to 795 (ILLVFFFPINSICNPFLYAFF) traverse the membrane as a helical segment. The Cytoplasmic segment spans residues 796–925 (TKAFKRELFT…QKQKILQSPS (130 aa)). Residues 904-925 (VTKSSSPPHLKLQKQKILQSPS) are disordered.

It belongs to the G-protein coupled receptor 1 family. FSH/LSH/TSH subfamily.

It is found in the cell membrane. Its function is as follows. Probable receptor for a glycoprotein hormone. The polypeptide is Probable glycoprotein hormone G-protein coupled receptor (Anthopleura elegantissima (Green aggregating anemone)).